The primary structure comprises 157 residues: Transcriptional repressor NrdR (157 aa).

A zinc finger lies at 3 to 34; it reads CPFCRHPDSRVVDSRTSDDGLSIRRRRQCPEC. Residues 46 to 136 form the ATP-cone domain; it reads LSVIKRNGVV…VYQGFDSLDD (91 aa).

Belongs to the NrdR family. It depends on Zn(2+) as a cofactor.

In terms of biological role, negatively regulates transcription of bacterial ribonucleotide reductase nrd genes and operons by binding to NrdR-boxes. The protein is Transcriptional repressor NrdR of Clavibacter michiganensis subsp. michiganensis (strain NCPPB 382).